The following is a 251-amino-acid chain: Probable transcriptional regulatory protein Mflv_3828 (251 aa).

It belongs to the TACO1 family.

It localises to the cytoplasm. This chain is Probable transcriptional regulatory protein Mflv_3828, found in Mycolicibacterium gilvum (strain PYR-GCK) (Mycobacterium gilvum (strain PYR-GCK)).